The primary structure comprises 218 residues: Small ribosomal subunit protein uS3c (218 aa).

In terms of domain architecture, KH type-2 spans 47–118 (VQKNMRTSSG…KLNIAVTRIA (72 aa)).

The protein belongs to the universal ribosomal protein uS3 family. As to quaternary structure, part of the 30S ribosomal subunit.

The protein resides in the plastid. The protein localises to the chloroplast. This Atropa belladonna (Belladonna) protein is Small ribosomal subunit protein uS3c (rps3).